The primary structure comprises 300 residues: GTPase Era (300 aa).

The Era-type G domain occupies 8–176 (RCGYVAIVGR…EALIAKHLPE (169 aa)). Residues 16–23 (GRPNVGKS) form a G1 region. Residue 16–23 (GRPNVGKS) participates in GTP binding. The tract at residues 42 to 46 (QTTRH) is G2. The interval 63 to 66 (DTPG) is G3. GTP-binding positions include 63–67 (DTPGM) and 125–128 (NKTD). The tract at residues 125–128 (NKTD) is G4. The G5 stretch occupies residues 155–157 (ISA). The region spanning 199–283 (VREKIMRQLG…MLNLWVKVKG (85 aa)) is the KH type-2 domain.

Belongs to the TRAFAC class TrmE-Era-EngA-EngB-Septin-like GTPase superfamily. Era GTPase family. As to quaternary structure, monomer.

The protein resides in the cytoplasm. It is found in the cell inner membrane. Its function is as follows. An essential GTPase that binds both GDP and GTP, with rapid nucleotide exchange. Plays a role in 16S rRNA processing and 30S ribosomal subunit biogenesis and possibly also in cell cycle regulation and energy metabolism. The protein is GTPase Era of Pseudomonas putida (strain W619).